The sequence spans 131 residues: uncharacterized protein (131 aa).

An N-terminal signal peptide occupies residues 1–19 (MRESLFIIFFQFVCHSSNS). A run of 2 helical transmembrane segments spans residues 33–53 (PLLTWTAPSIDLALSILALFF) and 111–131 (VSFNGDLIIIFVGETIFFFLF).

Its subcellular location is the membrane. This is an uncharacterized protein from Saccharomyces cerevisiae (strain ATCC 204508 / S288c) (Baker's yeast).